Here is a 507-residue protein sequence, read N- to C-terminus: GMP synthase [glutamine-hydrolyzing] 1 (507 aa).

Positions 4–193 (KIIILDFGSQ…VVDVCGCKQD (190 aa)) constitute a Glutamine amidotransferase type-1 domain. Residue C79 is the Nucleophile of the active site. Residues H167 and E169 contribute to the active site. Positions 194-382 (WSPASFIEST…LGMPEHLITR (189 aa)) constitute a GMPS ATP-PPase domain. 221–227 (SGGVDSS) provides a ligand contact to ATP.

Homodimer.

It carries out the reaction XMP + L-glutamine + ATP + H2O = GMP + L-glutamate + AMP + diphosphate + 2 H(+). Its pathway is purine metabolism; GMP biosynthesis; GMP from XMP (L-Gln route): step 1/1. In terms of biological role, catalyzes the synthesis of GMP from XMP. In Bacteroides thetaiotaomicron (strain ATCC 29148 / DSM 2079 / JCM 5827 / CCUG 10774 / NCTC 10582 / VPI-5482 / E50), this protein is GMP synthase [glutamine-hydrolyzing] 1 (guaA1).